We begin with the raw amino-acid sequence, 723 residues long: Catalase-peroxidase (723 aa).

The tryptophyl-tyrosyl-methioninium (Trp-Tyr) (with M-251) cross-link spans 96–225 (WHAAGSYRVA…LAAVMMGLIY (130 aa)). H97 (proton acceptor) is an active-site residue. The segment at residues 225 to 251 (YVNPEGVDGNPDPLKTAEDVRVTFARM) is a cross-link (tryptophyl-tyrosyl-methioninium (Tyr-Met) (with W-96)). H266 lines the heme b pocket.

The protein belongs to the peroxidase family. Peroxidase/catalase subfamily. In terms of assembly, homodimer or homotetramer. Heme b serves as cofactor. In terms of processing, formation of the three residue Trp-Tyr-Met cross-link is important for the catalase, but not the peroxidase activity of the enzyme.

It catalyses the reaction H2O2 + AH2 = A + 2 H2O. The catalysed reaction is 2 H2O2 = O2 + 2 H2O. Functionally, bifunctional enzyme with both catalase and broad-spectrum peroxidase activity. This Alkalilimnicola ehrlichii (strain ATCC BAA-1101 / DSM 17681 / MLHE-1) protein is Catalase-peroxidase.